We begin with the raw amino-acid sequence, 377 residues long: Cell division protein FtsZ (377 aa).

Positions 1-16 (MDSIVDDAIDEAEDMG) are enriched in acidic residues. Residues 1-33 (MDSIVDDAIDEAEDMGDGSAEVGGPTDINRSGT) form a disordered region. GTP is bound by residues 57-61 (GAGGN), 144-146 (GTG), glutamate 175, arginine 179, and aspartate 222.

It belongs to the FtsZ family. Homodimer. Polymerizes to form a dynamic ring structure in a strictly GTP-dependent manner. Interacts directly with several other division proteins.

The protein resides in the cytoplasm. In terms of biological role, essential cell division protein that forms a contractile ring structure (Z ring) at the future cell division site. The regulation of the ring assembly controls the timing and the location of cell division. One of the functions of the FtsZ ring is to recruit other cell division proteins to the septum to produce a new cell wall between the dividing cells. Binds GTP and shows GTPase activity. The chain is Cell division protein FtsZ from Haloferax mediterranei (strain ATCC 33500 / DSM 1411 / JCM 8866 / NBRC 14739 / NCIMB 2177 / R-4) (Halobacterium mediterranei).